Consider the following 485-residue polypeptide: Adenosylhomocysteinase (485 aa).

Substrate contacts are provided by Thr-64, Asp-139, and Glu-205. 206-208 (TTT) is an NAD(+) binding site. Substrate contacts are provided by Lys-235 and Asp-239. Residues Asn-240, 269–274 (GYGDVG), Glu-292, Asn-327, 348–350 (IGH), and Asn-397 contribute to the NAD(+) site.

The protein belongs to the adenosylhomocysteinase family. NAD(+) is required as a cofactor.

The enzyme catalyses S-adenosyl-L-homocysteine + H2O = L-homocysteine + adenosine. It participates in amino-acid biosynthesis; L-homocysteine biosynthesis; L-homocysteine from S-adenosyl-L-homocysteine: step 1/1. In terms of biological role, adenosylhomocysteine is a competitive inhibitor of S-adenosyl-L-methionine-dependent methyl transferase reactions; therefore adenosylhomocysteinase may play a key role in the control of methylations via regulation of the intracellular concentration of adenosylhomocysteine. In Solanum lycopersicum (Tomato), this protein is Adenosylhomocysteinase (SAHH).